The following is a 196-amino-acid chain: DnaA initiator-associating protein DiaA (196 aa).

The 163-residue stretch at V34–V196 folds into the SIS domain.

This sequence belongs to the SIS family. DiaA subfamily. Homotetramer; dimer of dimers.

In terms of biological role, required for the timely initiation of chromosomal replication via direct interactions with the DnaA initiator protein. The sequence is that of DnaA initiator-associating protein DiaA from Erwinia tasmaniensis (strain DSM 17950 / CFBP 7177 / CIP 109463 / NCPPB 4357 / Et1/99).